A 546-amino-acid chain; its full sequence is Acyl-CoA ligase oryP (546 aa).

ATP is bound by residues 166 to 174 (TSGTTGAPK), 300 to 305 (QFWLNL), and arginine 403. Residues 412–414 (WDH) and 482–484 (LLR) each bind CoA. Lysine 499 lines the ATP pocket.

This sequence belongs to the ATP-dependent AMP-binding enzyme family.

The protein operates within secondary metabolite biosynthesis. Functionally, acyl-CoA ligase; part of the gene cluster that mediates the biosynthesis of oryzines, natural products with an unusual maleidride backbone. The two subunits of the fungal fatty acid synthase oryfasA and oryfasB probably form octenoic acid. This fatty acid is most likely activated by the acyl-CoA ligase oryP to give octenyl-CoA before the citrate synthase-like protein oryE catalyzes condensation with oxaloacetate to form tricarboxylic acid. The next steps of the pathways are conjectural, but a favorite possible route has been proposed, beginning with decarboxylation and concomitant dehydration by the decarboxylase oryM, followed by tautomerization, which may lead to the production of a diene intermediate. Reduction of this diene intermediate could give the known metabolite piliformic acid. On the pathway to oryzine B and oryzine A, however, hydroxylation of the diene by the alpha-ketoglutarate-dependent dioxygenase oryG and lactonisation by the lactonohydrolases oryH or oryL could give oryzine B directly. Finally, enoyl reduction by the dehydrogenase oryD would then convert oryzine B into oryzine A. This Aspergillus oryzae (strain ATCC 42149 / RIB 40) (Yellow koji mold) protein is Acyl-CoA ligase oryP.